The chain runs to 422 residues: Probable metallocarboxypeptidase A (422 aa).

The first 17 residues, 1–17 (MRSVLSLALLAANVVTA), serve as a signal peptide directing secretion. Residues 18–112 (AVVAPFDYSG…FEAYSAGYAP (95 aa)) constitute a propeptide, activation peptide. One can recognise a Peptidase M14 domain in the interval 119–419 (SYHSYQDHLS…AGTVAMLKAV (301 aa)). Zn(2+) contacts are provided by histidine 179 and glutamate 182. Substrate-binding positions include 179–182 (HARE), arginine 237, and 254–255 (NR). A disulfide bond links cysteine 248 and cysteine 271. Position 309 (histidine 309) interacts with Zn(2+). 310–311 (SY) serves as a coordination point for substrate. The Proton donor/acceptor role is filled by glutamate 385.

This sequence belongs to the peptidase M14 family. It depends on Zn(2+) as a cofactor.

It is found in the secreted. Functionally, extracellular metalloprotease that contributes to pathogenicity. In Arthroderma benhamiae (strain ATCC MYA-4681 / CBS 112371) (Trichophyton mentagrophytes), this protein is Probable metallocarboxypeptidase A (MCPA).